Here is a 397-residue protein sequence, read N- to C-terminus: S-adenosylmethionine synthase (397 aa).

His-17 serves as a coordination point for ATP. Asp-19 is a binding site for Mg(2+). Glu-45 serves as a coordination point for K(+). L-methionine contacts are provided by Glu-58 and Gln-101. The interval 101–111 is flexible loop; the sequence is QSPDIAQGVDK. Residues 176-178, 243-244, Asp-252, 258-259, and Lys-279 contribute to the ATP site; these read DGK, RF, and RK. Asp-252 lines the L-methionine pocket. Lys-283 contributes to the L-methionine binding site.

It belongs to the AdoMet synthase family. As to quaternary structure, homotetramer; dimer of dimers. The cofactor is Mg(2+). K(+) is required as a cofactor.

The protein resides in the cytoplasm. It carries out the reaction L-methionine + ATP + H2O = S-adenosyl-L-methionine + phosphate + diphosphate. It participates in amino-acid biosynthesis; S-adenosyl-L-methionine biosynthesis; S-adenosyl-L-methionine from L-methionine: step 1/1. Its function is as follows. Catalyzes the formation of S-adenosylmethionine (AdoMet) from methionine and ATP. The overall synthetic reaction is composed of two sequential steps, AdoMet formation and the subsequent tripolyphosphate hydrolysis which occurs prior to release of AdoMet from the enzyme. In Staphylococcus aureus (strain MRSA252), this protein is S-adenosylmethionine synthase.